Reading from the N-terminus, the 208-residue chain is 3-demethoxyubiquinol 3-hydroxylase (208 aa).

The Fe cation site is built by glutamate 57, glutamate 87, histidine 90, glutamate 139, glutamate 171, and histidine 174.

The protein belongs to the COQ7 family. It depends on Fe cation as a cofactor.

It is found in the cell membrane. It catalyses the reaction a 5-methoxy-2-methyl-3-(all-trans-polyprenyl)benzene-1,4-diol + AH2 + O2 = a 3-demethylubiquinol + A + H2O. The protein operates within cofactor biosynthesis; ubiquinone biosynthesis. Its function is as follows. Catalyzes the hydroxylation of 2-nonaprenyl-3-methyl-6-methoxy-1,4-benzoquinol during ubiquinone biosynthesis. The chain is 3-demethoxyubiquinol 3-hydroxylase from Burkholderia pseudomallei (strain 668).